Reading from the N-terminus, the 76-residue chain is MIYKVFYQETKDRSPRRESTRSLYLEVEADNELEGRIKARKLVEENTDYNIEFIELLSDKHLEYEKESGTFQVTEF.

This sequence belongs to the RNA polymerase subunit epsilon family. RNAP is composed of a core of 2 alpha, a beta and a beta' subunit. The core is associated with a delta subunit, and at least one of epsilon or omega. When a sigma factor is associated with the core the holoenzyme is formed, which can initiate transcription.

The enzyme catalyses RNA(n) + a ribonucleoside 5'-triphosphate = RNA(n+1) + diphosphate. Functionally, a non-essential component of RNA polymerase (RNAP). In Streptococcus gordonii (strain Challis / ATCC 35105 / BCRC 15272 / CH1 / DL1 / V288), this protein is DNA-directed RNA polymerase subunit epsilon.